Consider the following 116-residue polypeptide: Toxin ICK-10 (116 aa).

The signal sequence occupies residues methionine 1 to alanine 19. 4 disulfides stabilise this stretch: cysteine 56–cysteine 71, cysteine 64–cysteine 77, cysteine 68–cysteine 113, and cysteine 70–cysteine 84.

Belongs to the neurotoxin 25 family. ICK-8 subfamily. Expressed by the venom gland.

It is found in the secreted. Its function is as follows. Ion channel inhibitor. This chain is Toxin ICK-10, found in Trittame loki (Brush-footed trapdoor spider).